The following is a 136-amino-acid chain: Holo-[acyl-carrier-protein] synthase (136 aa).

Positions 8 and 57 each coordinate Mg(2+).

The protein belongs to the P-Pant transferase superfamily. AcpS family. Mg(2+) is required as a cofactor.

It is found in the cytoplasm. It catalyses the reaction apo-[ACP] + CoA = holo-[ACP] + adenosine 3',5'-bisphosphate + H(+). Transfers the 4'-phosphopantetheine moiety from coenzyme A to a Ser of acyl-carrier-protein. The sequence is that of Holo-[acyl-carrier-protein] synthase from Methylorubrum extorquens (strain PA1) (Methylobacterium extorquens).